Consider the following 204-residue polypeptide: Holliday junction branch migration complex subunit RuvA (204 aa).

Positions 1–64 (MIGRLRGVVI…EDAQLLYGFN (64 aa)) are domain I. The segment at 65–143 (HKQERALFRE…GWVSHDLFSP (79 aa)) is domain II. The tract at residues 144 to 155 (AEISLPARESVL) is flexible linker. Positions 156–204 (RAPDSSEEAASALVALGYKPQQASQIVSKIAKEGMSVEDIIRESLRSLV) are domain III.

This sequence belongs to the RuvA family. In terms of assembly, homotetramer. Forms an RuvA(8)-RuvB(12)-Holliday junction (HJ) complex. HJ DNA is sandwiched between 2 RuvA tetramers; dsDNA enters through RuvA and exits via RuvB. An RuvB hexamer assembles on each DNA strand where it exits the tetramer. Each RuvB hexamer is contacted by two RuvA subunits (via domain III) on 2 adjacent RuvB subunits; this complex drives branch migration. In the full resolvosome a probable DNA-RuvA(4)-RuvB(12)-RuvC(2) complex forms which resolves the HJ.

The protein resides in the cytoplasm. Its function is as follows. The RuvA-RuvB-RuvC complex processes Holliday junction (HJ) DNA during genetic recombination and DNA repair, while the RuvA-RuvB complex plays an important role in the rescue of blocked DNA replication forks via replication fork reversal (RFR). RuvA specifically binds to HJ cruciform DNA, conferring on it an open structure. The RuvB hexamer acts as an ATP-dependent pump, pulling dsDNA into and through the RuvAB complex. HJ branch migration allows RuvC to scan DNA until it finds its consensus sequence, where it cleaves and resolves the cruciform DNA. In Aeromonas salmonicida (strain A449), this protein is Holliday junction branch migration complex subunit RuvA.